A 451-amino-acid chain; its full sequence is Interferon regulatory factor 4 (451 aa).

Residues 21 to 129 (NGKLRQWLID…DPYKVYRIVP (109 aa)) constitute a DNA-binding region (IRF tryptophan pentad repeat). 2 positions are modified to phosphoserine; by ROCK2: Ser447 and Ser448.

Belongs to the IRF family. As to quaternary structure, interacts with the BATF-JUNB heterodimer. Interacts with BATF (via bZIP domain); the interaction is direct. Interacts with SPIB. Interacts with DEF6. Directly interacts with NLRP3 in the nucleus of Th2 cells; this interaction enhances IRF4 ability to bind to the IL4 promoter and is required for optimal IRF4-dependent IL4 transcription. Interacts with SPI1. In terms of processing, phosphorylation by ROCK2 regulates IL-17 and IL-21 production. As to expression, lymphoid cells.

It is found in the nucleus. The protein resides in the cytoplasm. Functionally, transcriptional activator. Binds to the interferon-stimulated response element (ISRE) of the MHC class I promoter. Binds the immunoglobulin lambda light chain enhancer, together with PU.1. Probably plays a role in ISRE-targeted signal transduction mechanisms specific to lymphoid cells. Involved in CD8(+) dendritic cell differentiation by forming a complex with the BATF-JUNB heterodimer in immune cells, leading to recognition of AICE sequence (5'-TGAnTCA/GAAA-3'), an immune-specific regulatory element, followed by cooperative binding of BATF and IRF4 and activation of genes. This Homo sapiens (Human) protein is Interferon regulatory factor 4.